The chain runs to 706 residues: Transmembrane and coiled-coil domains protein 2 (706 aa).

2 disordered regions span residues 1-221 (MKRC…TTDT) and 251-280 (VALS…PDPQ). Serine 6 is modified (phosphoserine). Positions 83–94 (GLKHLFHSRRRS) are enriched in basic residues. Over residues 102 to 112 (SQEAQQQQQQQ) the composition is skewed to low complexity. Residues 120–131 (PDEKERSPEMHR) show a composition bias toward basic and acidic residues. The residue at position 163 (arginine 163) is an Omega-N-methylarginine. The stretch at 330–365 (KQVFEKKNQKSAQTIAQLHKKLEHYRRRLKEIEQNG) forms a coiled coil. Residue serine 435 is modified to Phosphoserine. The tract at residues 440–459 (AHLKDPMEDGPPEEAARALS) is disordered. Residues serine 461 and serine 467 each carry the phosphoserine modification. A disordered region spans residues 464-510 (LVSSPKYGSDDECSSASASSAGAGSNSGAGPGGALGSPRSNTLYGAP). The span at 477–487 (SSASASSAGAG) shows a compositional bias: low complexity. Residues 488–498 (SNSGAGPGGAL) show a composition bias toward gly residues. Serine 500 is subject to Phosphoserine. Positions 511 to 630 (GNLDTLLEEL…QQQQVVQLEG (120 aa)) form a coiled coil. The next 2 helical transmembrane spans lie at 646 to 666 (VILA…NFIT) and 679 to 699 (ALLL…TYLL).

It belongs to the TEX28 family. In terms of assembly, may form homodimers and heterodimers with TMCC2 or TMCC3 via the coiled-coil domains. Interacts with ribosomal proteins RPL4 and RPS6. Interacts with APOE and proteolytic processed C-terminal fragment C99 of the amyloid precursor protein (APP C99).

The protein resides in the endoplasmic reticulum membrane. May be involved in the regulation of the proteolytic processing of the amyloid precursor protein (APP) possibly also implicating APOE. This Mus musculus (Mouse) protein is Transmembrane and coiled-coil domains protein 2.